The following is a 396-amino-acid chain: N-acetylglucosamine-6-phosphate deacetylase (396 aa).

Residues histidine 63, histidine 65, and glutamate 136 each coordinate Fe cation. 147 to 148 (AQ) contacts substrate. Fe cation-binding residues include histidine 202 and histidine 223. Substrate is bound by residues 226 to 227 (NA), arginine 234, and 255 to 258 (DGIH). Aspartate 281 lines the Fe cation pocket. Aspartate 281 functions as the Proton donor in the catalytic mechanism. 314-316 (LAG) contacts substrate.

It belongs to the metallo-dependent hydrolases superfamily. NagA family. Homodimer. A divalent metal cation serves as cofactor.

The catalysed reaction is N-acetyl-D-glucosamine 6-phosphate + H2O = D-glucosamine 6-phosphate + acetate. It participates in amino-sugar metabolism; N-acetylneuraminate degradation; D-fructose 6-phosphate from N-acetylneuraminate: step 4/5. Its function is as follows. Involved in the first committed step in the biosynthesis of amino-sugar-nucleotides. Catalyzes the hydrolysis of the N-acetyl group of N-acetylglucosamine-6-phosphate (GlcNAc-6-P) to yield glucosamine 6-phosphate and acetate. Essential for growth on N-acetylglucosamine. This chain is N-acetylglucosamine-6-phosphate deacetylase (nagA), found in Bacillus subtilis (strain 168).